A 669-amino-acid polypeptide reads, in one-letter code: UvrABC system protein C (669 aa).

The 80-residue stretch at 16–95 (TNPGVYRFRD…IKEFKPRFNV (80 aa)) folds into the GIY-YIG domain. One can recognise a UVR domain in the interval 207–242 (KRFIGRLEKDMAAAVAELDYERAARVRDDIIALRKV).

Belongs to the UvrC family. Interacts with UvrB in an incision complex.

It is found in the cytoplasm. Functionally, the UvrABC repair system catalyzes the recognition and processing of DNA lesions. UvrC both incises the 5' and 3' sides of the lesion. The N-terminal half is responsible for the 3' incision and the C-terminal half is responsible for the 5' incision. The sequence is that of UvrABC system protein C from Arthrobacter sp. (strain FB24).